The chain runs to 482 residues: Complement C1r subcomponent-like protein (482 aa).

The N-terminal stretch at 1-43 (MSGFRGLVPELENSLWSSPTTSCMSKMCWWLLWGILHTCPTQA) is a signal peptide. One can recognise a CUB domain in the interval 44-166 (SVLLAQQSPQ…KGFLALYQAV (123 aa)). 2 disulfide bridges follow: cysteine 97/cysteine 115 and cysteine 190/cysteine 223. Residues 166 to 225 (VAVNQPNGDTEAVTTPGAPKIQNHCQDPYYKADQTGTLSCPSSWKWKDRQDGGEVPECVP) form the Sushi domain. Positions 240–479 (TFGSSRAKLG…YMDWIKRVIE (240 aa)) constitute a Peptidase S1 domain. Residues histidine 278 and aspartate 334 each act as charge relay system in the active site. Asparagine 358 carries N-linked (GlcNAc...) asparagine glycosylation. Intrachain disulfides connect cysteine 397/cysteine 416 and cysteine 427/cysteine 457. Serine 431 (charge relay system) is an active-site residue.

The protein belongs to the peptidase S1 family. Expressed in liver (at protein level).

Its subcellular location is the secreted. Functionally, mediates the proteolytic cleavage of HP/haptoglobin in the endoplasmic reticulum. The protein is Complement C1r subcomponent-like protein (C1rl) of Mus musculus (Mouse).